A 459-amino-acid chain; its full sequence is Exodeoxyribonuclease 7 large subunit (459 aa).

The protein belongs to the XseA family. Heterooligomer composed of large and small subunits.

The protein resides in the cytoplasm. It catalyses the reaction Exonucleolytic cleavage in either 5'- to 3'- or 3'- to 5'-direction to yield nucleoside 5'-phosphates.. Its function is as follows. Bidirectionally degrades single-stranded DNA into large acid-insoluble oligonucleotides, which are then degraded further into small acid-soluble oligonucleotides. The sequence is that of Exodeoxyribonuclease 7 large subunit from Pseudomonas putida (strain ATCC 47054 / DSM 6125 / CFBP 8728 / NCIMB 11950 / KT2440).